The following is a 496-amino-acid chain: Cobyric acid synthase (496 aa).

The region spanning 258–427 (TLTVAAIRLP…WHGLLDNDAL (170 aa)) is the GATase cobBQ-type domain. Cys339 functions as the Nucleophile in the catalytic mechanism. Residue His419 is part of the active site.

This sequence belongs to the CobB/CobQ family. CobQ subfamily.

It functions in the pathway cofactor biosynthesis; adenosylcobalamin biosynthesis. Its function is as follows. Catalyzes amidations at positions B, D, E, and G on adenosylcobyrinic A,C-diamide. NH(2) groups are provided by glutamine, and one molecule of ATP is hydrogenolyzed for each amidation. The chain is Cobyric acid synthase from Mycolicibacterium smegmatis (strain ATCC 700084 / mc(2)155) (Mycobacterium smegmatis).